Reading from the N-terminus, the 1801-residue chain is Focadhesin (1801 aa).

The residue at position 819 (K819) is an N6-acetyllysine.

Interacts with VCL. Ubiquitous. High expression in brain followed by testis, muscle, pancreas, heart, ovary, small intestine, placenta, prostate, thymus, kidney, colon, liver, lung, spleen and leukocytes. Expression is reduced in most glioblastomas and all glioblastoma cell lines.

Its subcellular location is the cell junction. The protein resides in the focal adhesion. The protein localises to the cytoplasm. It localises to the cytosol. Functionally, required for the maintenance of SKIC2 and SKIC3 proteostatic levels in the liver. May be involved in the regulation of RNA degradation by the exosome complex. Potential tumor suppressor in gliomas. This is Focadhesin from Homo sapiens (Human).